A 423-amino-acid chain; its full sequence is Serine hydroxymethyltransferase (423 aa).

Position 119-121 (119-121 (GHI)) interacts with (6S)-5,6,7,8-tetrahydrofolate. At lysine 225 the chain carries N6-(pyridoxal phosphate)lysine.

This sequence belongs to the SHMT family. Homodimer. It depends on pyridoxal 5'-phosphate as a cofactor.

It is found in the cytoplasm. The enzyme catalyses (6R)-5,10-methylene-5,6,7,8-tetrahydrofolate + glycine + H2O = (6S)-5,6,7,8-tetrahydrofolate + L-serine. It participates in one-carbon metabolism; tetrahydrofolate interconversion. Its pathway is amino-acid biosynthesis; glycine biosynthesis; glycine from L-serine: step 1/1. Catalyzes the reversible interconversion of serine and glycine with tetrahydrofolate (THF) serving as the one-carbon carrier. Also exhibits THF-independent aldolase activity toward beta-hydroxyamino acids, producing glycine and aldehydes, via a retro-aldol mechanism. The polypeptide is Serine hydroxymethyltransferase (Methanocella arvoryzae (strain DSM 22066 / NBRC 105507 / MRE50)).